Reading from the N-terminus, the 159-residue chain is 2-C-methyl-D-erythritol 2,4-cyclodiphosphate synthase (159 aa).

2 residues coordinate a divalent metal cation: Asp10 and His12. Residues 10 to 12 (DVH) and 36 to 37 (HS) contribute to the 4-CDP-2-C-methyl-D-erythritol 2-phosphate site. His44 contacts a divalent metal cation. 4-CDP-2-C-methyl-D-erythritol 2-phosphate is bound by residues 58 to 60 (DIG), 63 to 67 (FPDTD), 102 to 108 (AQAPKMA), 134 to 137 (TTTE), Phe141, and Arg144.

It belongs to the IspF family. Homotrimer. The cofactor is a divalent metal cation.

The enzyme catalyses 4-CDP-2-C-methyl-D-erythritol 2-phosphate = 2-C-methyl-D-erythritol 2,4-cyclic diphosphate + CMP. The protein operates within isoprenoid biosynthesis; isopentenyl diphosphate biosynthesis via DXP pathway; isopentenyl diphosphate from 1-deoxy-D-xylulose 5-phosphate: step 4/6. Functionally, involved in the biosynthesis of isopentenyl diphosphate (IPP) and dimethylallyl diphosphate (DMAPP), two major building blocks of isoprenoid compounds. Catalyzes the conversion of 4-diphosphocytidyl-2-C-methyl-D-erythritol 2-phosphate (CDP-ME2P) to 2-C-methyl-D-erythritol 2,4-cyclodiphosphate (ME-CPP) with a corresponding release of cytidine 5-monophosphate (CMP). The protein is 2-C-methyl-D-erythritol 2,4-cyclodiphosphate synthase of Shewanella frigidimarina (strain NCIMB 400).